Consider the following 40-residue polypeptide: Photosystem II reaction center protein J (40 aa).

The chain crosses the membrane as a helical span at residues 8–28; it reads IPLWIIGTVTGIIVIGLIGIF.

It belongs to the PsbJ family. In terms of assembly, PSII is composed of 1 copy each of membrane proteins PsbA, PsbB, PsbC, PsbD, PsbE, PsbF, PsbH, PsbI, PsbJ, PsbK, PsbL, PsbM, PsbT, PsbX, PsbY, PsbZ, Psb30/Ycf12, at least 3 peripheral proteins of the oxygen-evolving complex and a large number of cofactors. It forms dimeric complexes.

The protein localises to the plastid. The protein resides in the chloroplast thylakoid membrane. Functionally, one of the components of the core complex of photosystem II (PSII). PSII is a light-driven water:plastoquinone oxidoreductase that uses light energy to abstract electrons from H(2)O, generating O(2) and a proton gradient subsequently used for ATP formation. It consists of a core antenna complex that captures photons, and an electron transfer chain that converts photonic excitation into a charge separation. The protein is Photosystem II reaction center protein J of Morus indica (Mulberry).